Here is a 244-residue protein sequence, read N- to C-terminus: Phosphatidylinositol phosphate synthase (244 aa).

3 consecutive transmembrane segments (helical) span residues tyrosine 24 to arginine 42, threonine 49 to tyrosine 66, and phenylalanine 72 to methionine 91. Aspartate 48–threonine 51 contributes to the a CDP-1,2-diacyl-sn-glycerol binding site. Residues aspartate 85 and aspartate 88 each contribute to the Mg(2+) site. Residues glycine 89, arginine 93, and serine 99 each contribute to the a CDP-1,2-diacyl-sn-glycerol site. Residues aspartate 106 and aspartate 110 each contribute to the Mg(2+) site. Aspartate 110 (proton acceptor) is an active-site residue. A run of 3 helical transmembrane segments spans residues isoleucine 117–valine 137, leucine 174–glycine 190, and valine 196–isoleucine 214.

It belongs to the CDP-alcohol phosphatidyltransferase class-I family. Homodimer. It depends on Mg(2+) as a cofactor.

It is found in the cell membrane. It catalyses the reaction a CDP-1,2-diacyl-sn-glycerol + 1D-myo-inositol 3-phosphate = a 1,2-diacyl-sn-glycero-3-phospho-(1D-myo-inositol-3-phosphate) + CMP + H(+). The catalysed reaction is 1,2-di-(9Z-octadecenoyl)-sn-glycero-3-cytidine-5'-diphosphate + 1D-myo-inositol 3-phosphate = 1,2-di-(9Z-octadecenoyl)-sn-glycero-3-phospho-(1D-myo-inositol-3-phosphate) + CMP + H(+). It participates in phospholipid metabolism; phosphatidylinositol phosphate biosynthesis. Its function is as follows. Catalyzes the conjugation of the 1'-hydroxyl group of D-myo-inositol-3-phosphate (also named L-myo-inositol-1-phosphate) with a lipid tail of cytidine diphosphate diacylglycerol (CDP-DAG), forming phosphatidylinositol phosphate (PIP) and CMP. PIP is a precursor of phosphatidylinositol (PI) which is an essential lipid required for cell wall formation. The sequence is that of Phosphatidylinositol phosphate synthase from Streptomyces avermitilis (strain ATCC 31267 / DSM 46492 / JCM 5070 / NBRC 14893 / NCIMB 12804 / NRRL 8165 / MA-4680).